A 134-amino-acid chain; its full sequence is S-adenosylmethionine decarboxylase proenzyme (134 aa).

Catalysis depends on Ser64, which acts as the Schiff-base intermediate with substrate; via pyruvic acid. At Ser64 the chain carries Pyruvic acid (Ser); by autocatalysis. The active-site Proton acceptor; for processing activity is His69. The Proton donor; for catalytic activity role is filled by Cys84.

It belongs to the prokaryotic AdoMetDC family. Type 1 subfamily. In terms of assembly, heterotetramer of two alpha and two beta chains arranged as a dimer of alpha/beta heterodimers. It depends on pyruvate as a cofactor. In terms of processing, is synthesized initially as an inactive proenzyme. Formation of the active enzyme involves a self-maturation process in which the active site pyruvoyl group is generated from an internal serine residue via an autocatalytic post-translational modification. Two non-identical subunits are generated from the proenzyme in this reaction, and the pyruvate is formed at the N-terminus of the alpha chain, which is derived from the carboxyl end of the proenzyme. The post-translation cleavage follows an unusual pathway, termed non-hydrolytic serinolysis, in which the side chain hydroxyl group of the serine supplies its oxygen atom to form the C-terminus of the beta chain, while the remainder of the serine residue undergoes an oxidative deamination to produce ammonia and the pyruvoyl group blocking the N-terminus of the alpha chain.

It carries out the reaction S-adenosyl-L-methionine + H(+) = S-adenosyl 3-(methylsulfanyl)propylamine + CO2. The protein operates within amine and polyamine biosynthesis; S-adenosylmethioninamine biosynthesis; S-adenosylmethioninamine from S-adenosyl-L-methionine: step 1/1. Catalyzes the decarboxylation of S-adenosylmethionine to S-adenosylmethioninamine (dcAdoMet), the propylamine donor required for the synthesis of the polyamines spermine and spermidine from the diamine putrescine. The sequence is that of S-adenosylmethionine decarboxylase proenzyme from Hydrogenobaculum sp. (strain Y04AAS1).